Consider the following 193-residue polypeptide: Xanthine phosphoribosyltransferase (193 aa).

Leu20 and Thr27 together coordinate xanthine. 5-phospho-alpha-D-ribose 1-diphosphate is bound at residue 128 to 132 (ANGQA). Position 156 (Lys156) interacts with xanthine.

This sequence belongs to the purine/pyrimidine phosphoribosyltransferase family. Xpt subfamily. In terms of assembly, homodimer.

Its subcellular location is the cytoplasm. It catalyses the reaction XMP + diphosphate = xanthine + 5-phospho-alpha-D-ribose 1-diphosphate. It functions in the pathway purine metabolism; XMP biosynthesis via salvage pathway; XMP from xanthine: step 1/1. Converts the preformed base xanthine, a product of nucleic acid breakdown, to xanthosine 5'-monophosphate (XMP), so it can be reused for RNA or DNA synthesis. This is Xanthine phosphoribosyltransferase from Streptococcus equi subsp. zooepidemicus (strain H70).